A 206-amino-acid polypeptide reads, in one-letter code: Small ribosomal subunit protein uS4 (206 aa).

An S4 RNA-binding domain is found at 96 to 159 (TRLDNVVYRM…KKQARISASL (64 aa)).

It belongs to the universal ribosomal protein uS4 family. In terms of assembly, part of the 30S ribosomal subunit. Contacts protein S5. The interaction surface between S4 and S5 is involved in control of translational fidelity.

Its function is as follows. One of the primary rRNA binding proteins, it binds directly to 16S rRNA where it nucleates assembly of the body of the 30S subunit. In terms of biological role, with S5 and S12 plays an important role in translational accuracy. This is Small ribosomal subunit protein uS4 from Shewanella violacea.